Here is a 185-residue protein sequence, read N- to C-terminus: Ribosome-recycling factor (185 aa).

Belongs to the RRF family.

Its subcellular location is the cytoplasm. Responsible for the release of ribosomes from messenger RNA at the termination of protein biosynthesis. May increase the efficiency of translation by recycling ribosomes from one round of translation to another. The chain is Ribosome-recycling factor from Tolumonas auensis (strain DSM 9187 / NBRC 110442 / TA 4).